The chain runs to 93 residues: Small ribosomal subunit protein uS19 (93 aa).

This sequence belongs to the universal ribosomal protein uS19 family.

Its function is as follows. Protein S19 forms a complex with S13 that binds strongly to the 16S ribosomal RNA. The chain is Small ribosomal subunit protein uS19 from Agathobacter rectalis (strain ATCC 33656 / DSM 3377 / JCM 17463 / KCTC 5835 / VPI 0990) (Eubacterium rectale).